We begin with the raw amino-acid sequence, 465 residues long: L-cystine uptake protein TcyP (465 aa).

A run of 10 helical transmembrane segments spans residues leucine 3 to methionine 23, valine 34 to proline 54, tyrosine 73 to phenylalanine 93, isoleucine 105 to isoleucine 125, proline 184 to valine 204, alanine 224 to threonine 246, phenylalanine 263 to alanine 283, leucine 338 to alanine 358, phenylalanine 370 to glycine 390, and phenylalanine 394 to isoleucine 414.

This sequence belongs to the dicarboxylate/amino acid:cation symporter (DAACS) (TC 2.A.23) family.

It localises to the membrane. In terms of biological role, mediates uptake of L-cystine, the oxidized form of L-cysteine. The sequence is that of L-cystine uptake protein TcyP from Shouchella clausii (strain KSM-K16) (Alkalihalobacillus clausii).